Reading from the N-terminus, the 416-residue chain is CCA-adding enzyme (416 aa).

Residues Ser-42 and Lys-45 each contribute to the ATP site. Residues Ser-42 and Lys-45 each coordinate CTP. Mg(2+) is bound by residues Asp-54, Asp-56, and Asp-107. 3 residues coordinate ATP: His-130, Lys-150, and Tyr-159. Positions 130, 150, and 159 each coordinate CTP.

Belongs to the tRNA nucleotidyltransferase/poly(A) polymerase family. Archaeal CCA-adding enzyme subfamily. As to quaternary structure, homodimer. It depends on Mg(2+) as a cofactor.

It carries out the reaction a tRNA precursor + 2 CTP + ATP = a tRNA with a 3' CCA end + 3 diphosphate. The enzyme catalyses a tRNA with a 3' CCA end + 2 CTP + ATP = a tRNA with a 3' CCACCA end + 3 diphosphate. Its function is as follows. Catalyzes the addition and repair of the essential 3'-terminal CCA sequence in tRNAs without using a nucleic acid template. Adds these three nucleotides in the order of C, C, and A to the tRNA nucleotide-73, using CTP and ATP as substrates and producing inorganic pyrophosphate. tRNA 3'-terminal CCA addition is required both for tRNA processing and repair. Also involved in tRNA surveillance by mediating tandem CCA addition to generate a CCACCA at the 3' terminus of unstable tRNAs. While stable tRNAs receive only 3'-terminal CCA, unstable tRNAs are marked with CCACCA and rapidly degraded. The chain is CCA-adding enzyme from Sulfolobus acidocaldarius (strain ATCC 33909 / DSM 639 / JCM 8929 / NBRC 15157 / NCIMB 11770).